We begin with the raw amino-acid sequence, 116 residues long: Aspartate 1-decarboxylase (116 aa).

Catalysis depends on serine 25, which acts as the Schiff-base intermediate with substrate; via pyruvic acid. Serine 25 bears the Pyruvic acid (Ser) mark. Threonine 57 is a binding site for substrate. The active-site Proton donor is tyrosine 58. Residue 73–75 coordinates substrate; that stretch reads GAA.

It belongs to the PanD family. As to quaternary structure, heterooctamer of four alpha and four beta subunits. Requires pyruvate as cofactor. In terms of processing, is synthesized initially as an inactive proenzyme, which is activated by self-cleavage at a specific serine bond to produce a beta-subunit with a hydroxyl group at its C-terminus and an alpha-subunit with a pyruvoyl group at its N-terminus.

It localises to the cytoplasm. The enzyme catalyses L-aspartate + H(+) = beta-alanine + CO2. The protein operates within cofactor biosynthesis; (R)-pantothenate biosynthesis; beta-alanine from L-aspartate: step 1/1. In terms of biological role, catalyzes the pyruvoyl-dependent decarboxylation of aspartate to produce beta-alanine. The sequence is that of Aspartate 1-decarboxylase from Fervidobacterium nodosum (strain ATCC 35602 / DSM 5306 / Rt17-B1).